Here is a 210-residue protein sequence, read N- to C-terminus: dTTP/UTP pyrophosphatase (210 aa).

Positions 1–15 (MTHGDNRDGPGRETR) are enriched in basic and acidic residues. The tract at residues 1–22 (MTHGDNRDGPGRETRSSGPLVL) is disordered. The Proton acceptor role is filled by Asp86.

It belongs to the Maf family. YhdE subfamily. Requires a divalent metal cation as cofactor.

The protein localises to the cytoplasm. The enzyme catalyses dTTP + H2O = dTMP + diphosphate + H(+). It catalyses the reaction UTP + H2O = UMP + diphosphate + H(+). Functionally, nucleoside triphosphate pyrophosphatase that hydrolyzes dTTP and UTP. May have a dual role in cell division arrest and in preventing the incorporation of modified nucleotides into cellular nucleic acids. The protein is dTTP/UTP pyrophosphatase of Rhodospirillum rubrum (strain ATCC 11170 / ATH 1.1.1 / DSM 467 / LMG 4362 / NCIMB 8255 / S1).